The chain runs to 165 residues: LIM domain transcription factor LMO4 (165 aa).

LIM zinc-binding domains follow at residues Cys-23 to Asn-83 and Cys-87 to Asn-147.

In terms of assembly, interacts strongly with LDBS. Interacts with LDB2 and LDB1. Interaction with complexes consisting of at least LDB1 and LHX3 acts to disassemble the complex; may preferentially disassemble LDB1-LHX3 complexes rather than complexes consisting of LDB1, LHX3 and ISL1. Interacts (via the LIM zinc-binding domain 1) with RBBP8. Interacts with both RPPB8 and LDB1 through the same face and cannot bind to both proteins simultaneously. Interacts with BRCA1 (via the BRCT domains); the interaction represses BRCA1 transcriptional activity. Interacts with DEAF1; LMO4 blocks export from nucleus.

Its function is as follows. Transcription cofactor. Plays a role in establishing motor neuron identity, in concert with MNX1, acting, at least in part, to disrupt LDB1-LHX3 complexes thereby negatively modulating interneuron genes in motor neurons. The sequence is that of LIM domain transcription factor LMO4 (LMO4) from Bos taurus (Bovine).